Consider the following 426-residue polypeptide: Serine--tRNA ligase (426 aa).

Positions 36–66 (KRKHLQERTQDLQSQRNTISKEIGQKKAKGE) are disordered. A compositionally biased stretch (polar residues) spans 46 to 55 (DLQSQRNTIS). 233 to 235 (TAE) lines the L-serine pocket. 264–266 (RSE) lines the ATP pocket. Glu287 is a binding site for L-serine. Residue 351–354 (EISS) coordinates ATP. Ser387 serves as a coordination point for L-serine.

Belongs to the class-II aminoacyl-tRNA synthetase family. Type-1 seryl-tRNA synthetase subfamily. Homodimer. The tRNA molecule binds across the dimer.

The protein localises to the cytoplasm. The enzyme catalyses tRNA(Ser) + L-serine + ATP = L-seryl-tRNA(Ser) + AMP + diphosphate + H(+). It catalyses the reaction tRNA(Sec) + L-serine + ATP = L-seryl-tRNA(Sec) + AMP + diphosphate + H(+). Its pathway is aminoacyl-tRNA biosynthesis; selenocysteinyl-tRNA(Sec) biosynthesis; L-seryl-tRNA(Sec) from L-serine and tRNA(Sec): step 1/1. In terms of biological role, catalyzes the attachment of serine to tRNA(Ser). Is also able to aminoacylate tRNA(Sec) with serine, to form the misacylated tRNA L-seryl-tRNA(Sec), which will be further converted into selenocysteinyl-tRNA(Sec). In Francisella tularensis subsp. tularensis (strain FSC 198), this protein is Serine--tRNA ligase.